The primary structure comprises 126 residues: Major sperm protein 1 (126 aa).

The residue at position 2 (A2) is an N-acetylalanine. The MSP domain occupies 8–125 (DIATMPAQKV…RRKNLPIEYN (118 aa)).

Sperm.

It is found in the cell projection. The protein localises to the pseudopodium. It localises to the cytoplasm. The protein resides in the cytoskeleton. Central component in molecular interactions underlying sperm crawling. Forms an extensive filament system that extends from sperm villipoda, along the leading edge of the pseudopod. This chain is Major sperm protein 1 (MSP-1), found in Globodera rostochiensis (Golden nematode worm).